The primary structure comprises 311 residues: Lipoyl synthase (311 aa).

[4Fe-4S] cluster-binding residues include cysteine 47, cysteine 52, cysteine 58, cysteine 73, cysteine 77, cysteine 80, and serine 286. Positions 59-276 (WSRHTATYLA…RSVGESLGLF (218 aa)) constitute a Radical SAM core domain.

It belongs to the radical SAM superfamily. Lipoyl synthase family. Requires [4Fe-4S] cluster as cofactor.

The protein resides in the cytoplasm. The catalysed reaction is [[Fe-S] cluster scaffold protein carrying a second [4Fe-4S](2+) cluster] + N(6)-octanoyl-L-lysyl-[protein] + 2 oxidized [2Fe-2S]-[ferredoxin] + 2 S-adenosyl-L-methionine + 4 H(+) = [[Fe-S] cluster scaffold protein] + N(6)-[(R)-dihydrolipoyl]-L-lysyl-[protein] + 4 Fe(3+) + 2 hydrogen sulfide + 2 5'-deoxyadenosine + 2 L-methionine + 2 reduced [2Fe-2S]-[ferredoxin]. It participates in protein modification; protein lipoylation via endogenous pathway; protein N(6)-(lipoyl)lysine from octanoyl-[acyl-carrier-protein]: step 2/2. Functionally, catalyzes the radical-mediated insertion of two sulfur atoms into the C-6 and C-8 positions of the octanoyl moiety bound to the lipoyl domains of lipoate-dependent enzymes, thereby converting the octanoylated domains into lipoylated derivatives. The protein is Lipoyl synthase of Chlamydia trachomatis serovar D (strain ATCC VR-885 / DSM 19411 / UW-3/Cx).